The following is a 316-amino-acid chain: Aspartate carbamoyltransferase catalytic subunit (316 aa).

The carbamoyl phosphate site is built by Arg56 and Thr57. Lys84 contacts L-aspartate. Arg106, His139, and Gln142 together coordinate carbamoyl phosphate. L-aspartate-binding residues include Arg172 and Arg224. 2 residues coordinate carbamoyl phosphate: Gly268 and Pro269.

The protein belongs to the aspartate/ornithine carbamoyltransferase superfamily. ATCase family. Heterododecamer (2C3:3R2) of six catalytic PyrB chains organized as two trimers (C3), and six regulatory PyrI chains organized as three dimers (R2).

It carries out the reaction carbamoyl phosphate + L-aspartate = N-carbamoyl-L-aspartate + phosphate + H(+). Its pathway is pyrimidine metabolism; UMP biosynthesis via de novo pathway; (S)-dihydroorotate from bicarbonate: step 2/3. Its function is as follows. Catalyzes the condensation of carbamoyl phosphate and aspartate to form carbamoyl aspartate and inorganic phosphate, the committed step in the de novo pyrimidine nucleotide biosynthesis pathway. The protein is Aspartate carbamoyltransferase catalytic subunit of Ligilactobacillus salivarius (strain UCC118) (Lactobacillus salivarius).